Here is a 136-residue protein sequence, read N- to C-terminus: Succinate dehydrogenase 2 membrane subunit SdhC (136 aa).

Transmembrane regions (helical) follow at residues 32 to 52, 70 to 90, and 109 to 129; these read RISG…AAML, IVGL…LNGI, and LWII…VVGI. Residue His-85 participates in heme binding.

It belongs to the cytochrome b560 family. Part of an enzyme complex containing four subunits: a flavoprotein (SdhA), an iron-sulfur protein (SdhB), plus two membrane-anchoring proteins (SdhC and SdhD). Heme is required as a cofactor.

It localises to the cell membrane. Its function is as follows. Membrane-anchoring subunit of succinate dehydrogenase 2 (Sdh2). Sdh2 may catalyze the two-electron oxidation of succinate to fumarate with a corresponding reduction of quinone to quinol under low oxygen conditions, when the primary aerobic succinate dehydrogenase (Sdh1) is inhibited. Sdh2 seems to be the generator of the proton motive force (PMF) under hypoxia. This chain is Succinate dehydrogenase 2 membrane subunit SdhC, found in Mycobacterium tuberculosis (strain ATCC 25618 / H37Rv).